The sequence spans 148 residues: UPF0178 protein lpg0089 (148 aa).

Belongs to the UPF0178 family.

The sequence is that of UPF0178 protein lpg0089 from Legionella pneumophila subsp. pneumophila (strain Philadelphia 1 / ATCC 33152 / DSM 7513).